The sequence spans 628 residues: Very-long-chain aldehyde decarbonylase GL1-2 (628 aa).

The next 5 helical transmembrane spans lie at 37–57 (GAAP…ARGL), 131–151 (GWAI…YWAH), 191–211 (VVIG…VGLV), 299–319 (DFVF…PFVL), and 331–351 (FVLL…WCCS). The Fatty acid hydroxylase domain occupies 137–277 (LLHVLVAEPL…MPIFDLLGGT (141 aa)).

Belongs to the sterol desaturase family. As to quaternary structure, homodimer.

The protein localises to the endoplasmic reticulum membrane. The catalysed reaction is a long-chain fatty aldehyde + 2 NADPH + O2 + H(+) = a long-chain alkane + formate + 2 NADP(+) + H2O. In terms of biological role, aldehyde decarbonylase involved in the conversion of aldehydes to alkanes. Core component of a very-long-chain alkane synthesis complex. The polypeptide is Very-long-chain aldehyde decarbonylase GL1-2 (Oryza sativa subsp. indica (Rice)).